The chain runs to 148 residues: Endoribonuclease YbeY (148 aa).

3 residues coordinate Zn(2+): His-113, His-117, and His-123.

It belongs to the endoribonuclease YbeY family. Zn(2+) serves as cofactor.

Its subcellular location is the cytoplasm. In terms of biological role, single strand-specific metallo-endoribonuclease involved in late-stage 70S ribosome quality control and in maturation of the 3' terminus of the 16S rRNA. The sequence is that of Endoribonuclease YbeY from Borrelia recurrentis (strain A1).